We begin with the raw amino-acid sequence, 310 residues long: Nodulation protein D 1 (310 aa).

The HTH lysR-type domain occupies 6–63 (LDLNLLVALDALMTERQLTAAARRINLSQPAMSAAIARLRNYFHDDLFVMQGRELILT). The H-T-H motif DNA-binding region spans 23-42 (LTAAARRINLSQPAMSAAIA).

Belongs to the LysR transcriptional regulatory family.

NodD regulates the expression of the nodABCFE genes which encode other nodulation proteins. NodD is also a negative regulator of its own expression. Binds flavonoids as inducers. This Neorhizobium galegae (Rhizobium galegae) protein is Nodulation protein D 1 (nodD1).